The primary structure comprises 200 residues: Holliday junction branch migration complex subunit RuvA (200 aa).

Positions methionine 1 to alanine 63 are domain I. The segment at aspartate 64–glycine 142 is domain II. The flexible linker stretch occupies residues glycine 142–proline 146. The tract at residues alanine 147–alanine 200 is domain III.

The protein belongs to the RuvA family. In terms of assembly, homotetramer. Forms an RuvA(8)-RuvB(12)-Holliday junction (HJ) complex. HJ DNA is sandwiched between 2 RuvA tetramers; dsDNA enters through RuvA and exits via RuvB. An RuvB hexamer assembles on each DNA strand where it exits the tetramer. Each RuvB hexamer is contacted by two RuvA subunits (via domain III) on 2 adjacent RuvB subunits; this complex drives branch migration. In the full resolvosome a probable DNA-RuvA(4)-RuvB(12)-RuvC(2) complex forms which resolves the HJ.

It is found in the cytoplasm. Its function is as follows. The RuvA-RuvB-RuvC complex processes Holliday junction (HJ) DNA during genetic recombination and DNA repair, while the RuvA-RuvB complex plays an important role in the rescue of blocked DNA replication forks via replication fork reversal (RFR). RuvA specifically binds to HJ cruciform DNA, conferring on it an open structure. The RuvB hexamer acts as an ATP-dependent pump, pulling dsDNA into and through the RuvAB complex. HJ branch migration allows RuvC to scan DNA until it finds its consensus sequence, where it cleaves and resolves the cruciform DNA. The chain is Holliday junction branch migration complex subunit RuvA from Nocardioides sp. (strain ATCC BAA-499 / JS614).